The following is a 385-amino-acid chain: Pre-mRNA-splicing factor slt-11 (385 aa).

Positions 157–233 are disordered; it reads RKGREVDEEG…PPGPKDWLPP (77 aa). The span at 171–187 shows a compositional bias: low complexity; it reads GSSSGAGRATGGNPAVG. In terms of domain architecture, RRM spans 239-312; sequence MSLFVTGIED…CPLRVRWSVP (74 aa). The span at 320–331 shows a compositional bias: basic and acidic residues; the sequence is KEQRSEMLRDGR. Residues 320 to 370 are disordered; that stretch reads KEQRSEMLRDGRSAFGSGQKTGGQKAIGGQNAQGGASGAQKDDASNLTIAA.

It belongs to the SLT11 family. In terms of assembly, associated with the spliceosome.

The protein resides in the nucleus. Involved in pre-mRNA splicing. Facilitates the cooperative formation of U2/U6 helix II in association with stem II in the spliceosome. Binds to RNA. The sequence is that of Pre-mRNA-splicing factor slt-11 (slt-11) from Neurospora crassa (strain ATCC 24698 / 74-OR23-1A / CBS 708.71 / DSM 1257 / FGSC 987).